Reading from the N-terminus, the 323-residue chain is Aspartate carbamoyltransferase catalytic subunit (323 aa).

Carbamoyl phosphate contacts are provided by arginine 71 and threonine 72. Lysine 99 contacts L-aspartate. Arginine 121, histidine 151, and glutamine 154 together coordinate carbamoyl phosphate. The L-aspartate site is built by arginine 184 and arginine 239. Residues glycine 280 and proline 281 each contribute to the carbamoyl phosphate site.

Belongs to the aspartate/ornithine carbamoyltransferase superfamily. ATCase family. As to quaternary structure, heterododecamer (2C3:3R2) of six catalytic PyrB chains organized as two trimers (C3), and six regulatory PyrI chains organized as three dimers (R2).

The catalysed reaction is carbamoyl phosphate + L-aspartate = N-carbamoyl-L-aspartate + phosphate + H(+). It participates in pyrimidine metabolism; UMP biosynthesis via de novo pathway; (S)-dihydroorotate from bicarbonate: step 2/3. Catalyzes the condensation of carbamoyl phosphate and aspartate to form carbamoyl aspartate and inorganic phosphate, the committed step in the de novo pyrimidine nucleotide biosynthesis pathway. This Cupriavidus metallidurans (strain ATCC 43123 / DSM 2839 / NBRC 102507 / CH34) (Ralstonia metallidurans) protein is Aspartate carbamoyltransferase catalytic subunit.